The primary structure comprises 414 residues: Esterase FrsA (414 aa).

It belongs to the FrsA family.

The enzyme catalyses a carboxylic ester + H2O = an alcohol + a carboxylate + H(+). Its function is as follows. Catalyzes the hydrolysis of esters. The polypeptide is Esterase FrsA (Shigella dysenteriae serotype 1 (strain Sd197)).